Reading from the N-terminus, the 1135-residue chain is MPGLVEAPVEPYARPVRTLVQLALDPDDGLEYVSLNSQVYELIYGDLSDNKTRFVSLQLLGSPLFVEYQLFRAELDSELPQDSIELHSPRLSSKYGSDFTLEKCIVVPVTKVLSLTSVIMSFPHDVYRLIEGISKERLLEIVASERGSDAGHILIRKTDFLKTLHGEVIHCEPVDQGFLSSDTNLVIVKQEGLKRGVNGNVNGSHPDPSEIPVSTPVDFSVSHLGLGDLTFDDTSIFSNLTLQPLELQIGFLKYSMLMDCTHILESSHEFDHEDDQLFACVCSSVLQKLGCFSGDLVQIQTCDCGAGIVCACDKSARRKITIRVFSLADPNDFDPEKLYLSPIFLNSIGNPRIVFVKRLASQRPNGDFVCEKLENHVPVAKEVVIARVASPITLDRTMQHLFLSNLKTYFESKHRVIVKDQYIPVPIDTVLAKSLFSTYNASGDETQPEIIPQGIPNELAWFKITDGTTETDDGKSLVAGKQYIIDPAKTRMIQSGVCSDKVPLSDGISYSQLRDYFELPRQFAYPCLRISNVLTFPYANQLRKIVSVAFRIRDNSYSRSRVQTTILLSSMARCVGKATLVRRIATEFGANLLELDAYDLLNQASVSKTIGTIRGKSDRVVDSCCSVILYIRHIEALAKKPDPNQQQKDSMSLRLAELIDEYTSKGAIFIGSTNDADAISELIRSKFKFDISINVPTEPERKLILTDLLDDMKTKDKTPVVLRPDVSLDTLALQSAGLTANDLVSIVDNTITIAIERLERLSEEQKVNWDQLLSFNGGRIKLTPEDFETSINDARNKFSDMIGAPRIPDVKWEDVGGLDVVKDEILDTIEMPLKHPELFSKGMKKRSGILFYGPPGTGKTLLAKAIATNFALNFFSVKGPELLNMYIGESEANVRRVFQKARDAKPCVIFFDELDSVAPKRGNQGDSGGVMDRIVSQLLAELDGMSGAEGGDGVFVVGATNRPDLLDEALLRPGRFDKMLYLGIADTHEKQAKIIQALTRKFQLDPSVDLGRIAETCPFTYTGADFYALCSDAMLNAMTRTAGAVEKKINEYNCNREEGDKISTRFWFDNIAKPEDTQVLVKSEDFAKARDELVPSVSAEELQHYLSVRENFEGGKTQDVMHTVPDGADIIISHD.

853–860 (GPPGTGKT) provides a ligand contact to ATP.

Belongs to the AAA ATPase family. Interacts with PEX1; forming the PEX1-PEX6 AAA ATPase complex, which is composed of a heterohexamer formed by a trimer of PEX1-PEX6 dimers.

It is found in the cytoplasm. The protein resides in the cytosol. It localises to the peroxisome membrane. The catalysed reaction is ATP + H2O = ADP + phosphate + H(+). Component of the PEX1-PEX6 AAA ATPase complex, a protein dislocase complex that mediates the ATP-dependent extraction of the PEX5 receptor from peroxisomal membranes, an essential step for PEX5 recycling. Specifically recognizes PEX5 monoubiquitinated at 'Cys-6', and pulls it out of the peroxisome lumen through the PEX2-PEX10-PEX12 retrotranslocation channel. Extraction by the PEX1-PEX6 AAA ATPase complex is accompanied by unfolding of the TPR repeats and release of bound cargo from PEX5. This is Peroxisomal ATPase PEX6 (PEX6) from Pichia angusta (Yeast).